The following is a 542-amino-acid chain: Chaperonin GroEL (542 aa).

Residues 29–32, 86–90, glycine 413, 476–478, and aspartate 492 contribute to the ATP site; these read TLGP, DGTTT, and NAA. Residues 522 to 542 form a disordered region; it reads PDENGPAAVPDMGMGGMGGMM.

This sequence belongs to the chaperonin (HSP60) family. In terms of assembly, forms a cylinder of 14 subunits composed of two heptameric rings stacked back-to-back. Interacts with the co-chaperonin GroES.

It localises to the cytoplasm. The catalysed reaction is ATP + H2O + a folded polypeptide = ADP + phosphate + an unfolded polypeptide.. In terms of biological role, together with its co-chaperonin GroES, plays an essential role in assisting protein folding. The GroEL-GroES system forms a nano-cage that allows encapsulation of the non-native substrate proteins and provides a physical environment optimized to promote and accelerate protein folding. This Listeria monocytogenes serotype 4a (strain HCC23) protein is Chaperonin GroEL.